The primary structure comprises 336 residues: Phosphate acyltransferase (336 aa).

The protein belongs to the PlsX family. Homodimer. Probably interacts with PlsY.

The protein resides in the cytoplasm. It carries out the reaction a fatty acyl-[ACP] + phosphate = an acyl phosphate + holo-[ACP]. The protein operates within lipid metabolism; phospholipid metabolism. Its function is as follows. Catalyzes the reversible formation of acyl-phosphate (acyl-PO(4)) from acyl-[acyl-carrier-protein] (acyl-ACP). This enzyme utilizes acyl-ACP as fatty acyl donor, but not acyl-CoA. This chain is Phosphate acyltransferase, found in Ectopseudomonas mendocina (strain ymp) (Pseudomonas mendocina).